Here is a 165-residue protein sequence, read N- to C-terminus: uncharacterized protein (165 aa).

The first 25 residues, 1 to 25 (MKRVLFSVIVFTAVGFTFCQSKAHA), serve as a signal peptide directing secretion.

This is an uncharacterized protein from Bacillus subtilis (strain 168).